The primary structure comprises 78 residues: MKKQDLIDMEGVVTESLPNAMFRVCLDNGCQVLTHISGRIRRNYIRILPGDRVRVESSPYDLTKGRITYRLRAKSSTD.

The S1-like domain maps to 1–72; the sequence is MKKQDLIDME…TKGRITYRLR (72 aa).

Belongs to the IF-1 family. Component of the 30S ribosomal translation pre-initiation complex which assembles on the 30S ribosome in the order IF-2 and IF-3, IF-1 and N-formylmethionyl-tRNA(fMet); mRNA recruitment can occur at any time during PIC assembly.

The protein resides in the plastid. One of the essential components for the initiation of protein synthesis. Stabilizes the binding of IF-2 and IF-3 on the 30S subunit to which N-formylmethionyl-tRNA(fMet) subsequently binds. Helps modulate mRNA selection, yielding the 30S pre-initiation complex (PIC). Upon addition of the 50S ribosomal subunit IF-1, IF-2 and IF-3 are released leaving the mature 70S translation initiation complex. The polypeptide is Translation initiation factor IF-1, plastid (Aneura mirabilis (Parasitic liverwort)).